The sequence spans 106 residues: MIITTTNGIEGKRVVEYKGIVCGEVISGVDFIKDFAAGLTNFFGGRSKSYEGELIEAREGAIREMKERAIQMGANAIIGVDIDYEVLGQGGNMLMVTASGTAVVIE.

It belongs to the UPF0145 family.

This chain is UPF0145 protein Cthe_0398, found in Acetivibrio thermocellus (strain ATCC 27405 / DSM 1237 / JCM 9322 / NBRC 103400 / NCIMB 10682 / NRRL B-4536 / VPI 7372) (Clostridium thermocellum).